A 71-amino-acid chain; its full sequence is UPF0434 protein Meso_3270 (71 aa).

Belongs to the UPF0434 family.

This chain is UPF0434 protein Meso_3270, found in Chelativorans sp. (strain BNC1).